The following is a 1530-amino-acid chain: Coiled-coil domain-containing protein 141 (1530 aa).

Thr91 is subject to Phosphothreonine. 3 coiled-coil regions span residues 642 to 706 (VKNE…EALM), 758 to 783 (VKEKSQQLKDLIHFHQKQKERIQDYE), and 861 to 970 (SNVS…KTSD). The interval 1210–1241 (SPDDISLPPLPGSPESPLAPSDMEVEEPVSSS) is disordered. One can recognise an Ig-like domain in the interval 1409–1530 (PNFSRLLSNV…VSLMYWLLTQ (122 aa)).

As to quaternary structure, interacts with DISC1. Interacts preferentially with phosphorylated forms of myosin regulatory light chain (MRLC). Interacts (via the N-terminal region) with HDAC6; inhibits the deacetylase activity of HDAC6. Interacts with KIBRA (via the C-terminal region); retains AMPAR in the cytosol after internalization. In terms of processing, ubiquitinated and degradated by the CDC20-APC/C pathway. During brain development, CDC20-APC/C complex degrades CCDC141 after centrosome translocation into the dilated area. CCDC141 is restabilized in the dilation until the centrosome enters the dilation, at which point it is once again immediately destabilized by CDC20-APC/C complex. The oscillatory regulation of CCDC141 protein is needed for proper cortical migration. Post-translationally, phosphorylation at Thr-91 by PLK1 affects CCDC141 degradation.

The protein localises to the cytoplasm. The protein resides in the cytoskeleton. Its subcellular location is the microtubule organizing center. It localises to the centrosome. In terms of biological role, plays a critical role in cortical radial and GnRH neurons migration during brain development. Regulates cortical radial migration by negatively controlling the activity of histone deacetylase 6 (HDAC6) and promotes centrosome maturation. CAMDI is required for dilation formation of cortical neurons during radial migration. Plays a critical role in learning and memory performance through regulation of AMPA-selective glutamate receptors (AMPARs) cell surface expression in competition with KIBRA. The sequence is that of Coiled-coil domain-containing protein 141 (CCDC141) from Homo sapiens (Human).